The chain runs to 85 residues: Large ribosomal subunit protein bL31B (85 aa).

This sequence belongs to the bacterial ribosomal protein bL31 family. Type B subfamily. As to quaternary structure, part of the 50S ribosomal subunit.

This is Large ribosomal subunit protein bL31B from Stutzerimonas stutzeri (strain A1501) (Pseudomonas stutzeri).